A 271-amino-acid polypeptide reads, in one-letter code: Imidazole glycerol phosphate synthase subunit HisF (271 aa).

Active-site residues include Asp-12 and Asp-131.

The protein belongs to the HisA/HisF family. In terms of assembly, heterodimer of HisH and HisF.

It is found in the cytoplasm. It catalyses the reaction 5-[(5-phospho-1-deoxy-D-ribulos-1-ylimino)methylamino]-1-(5-phospho-beta-D-ribosyl)imidazole-4-carboxamide + L-glutamine = D-erythro-1-(imidazol-4-yl)glycerol 3-phosphate + 5-amino-1-(5-phospho-beta-D-ribosyl)imidazole-4-carboxamide + L-glutamate + H(+). The protein operates within amino-acid biosynthesis; L-histidine biosynthesis; L-histidine from 5-phospho-alpha-D-ribose 1-diphosphate: step 5/9. IGPS catalyzes the conversion of PRFAR and glutamine to IGP, AICAR and glutamate. The HisF subunit catalyzes the cyclization activity that produces IGP and AICAR from PRFAR using the ammonia provided by the HisH subunit. This Methanospirillum hungatei JF-1 (strain ATCC 27890 / DSM 864 / NBRC 100397 / JF-1) protein is Imidazole glycerol phosphate synthase subunit HisF.